Reading from the N-terminus, the 124-residue chain is Large ribosomal subunit protein bL17 (124 aa).

Belongs to the bacterial ribosomal protein bL17 family. In terms of assembly, part of the 50S ribosomal subunit. Contacts protein L32.

This Mycoplasma pneumoniae (strain ATCC 29342 / M129 / Subtype 1) (Mycoplasmoides pneumoniae) protein is Large ribosomal subunit protein bL17.